The primary structure comprises 275 residues: Calcium uniporter protein, mitochondrial (275 aa).

A mitochondrion-targeting transit peptide spans 1 to 28; the sequence is MNSFVIRNGFGLVRTFNTRLFTTSTQNL. Topologically, residues 29-165 are mitochondrial matrix; the sequence is EGELKTILGQ…DRKAHRRATA (137 aa). Residues 125 to 157 are a coiled coil; that stretch reads VGLNKLIESKKSEINSLRQKIQPLEEKKQVIDR. The helical transmembrane segment at 166–186 threads the bilayer; that stretch reads IIWTGLGYCFAQAAILARLTW. Residues 187 to 192 lie on the Mitochondrial intermembrane side of the membrane; the sequence is WDLSWD. The Selectivity filter motif lies at 191–199; it reads WDIIEPVSY. The chain crosses the membrane as a helical span at residues 193–213; the sequence is IIEPVSYFLTFGSVLIGYTYF. E195 lines the Ca(2+) pocket. At 214-275 the chain is on the mitochondrial matrix side; sequence TMTKTEFTYE…ELATKYDHTH (62 aa). Residues 244-270 are a coiled coil; sequence PKEDYENLVQAIDKKEKELKELELATK.

This sequence belongs to the MCU (TC 1.A.77) family. Homooligomer.

It localises to the mitochondrion inner membrane. The enzyme catalyses Ca(2+)(in) = Ca(2+)(out). Inhibited by ruthenium red or its derivative Ru360. Its function is as follows. Mitochondrial inner membrane calcium uniporter that mediates calcium uptake into mitochondria. Constitutes a pore-forming and calcium-conducting subunit. Mitochondrial calcium homeostasis plays key roles in cellular physiology and regulates cell bioenergetics, cytoplasmic calcium signals and activation of cell death pathways. Sufficient to operate as a pore-forming channel without the need of calcium-sensor or auxiliary subunit. This chain is Calcium uniporter protein, mitochondrial, found in Dictyostelium discoideum (Social amoeba).